Here is a 276-residue protein sequence, read N- to C-terminus: S-adenosylmethionine-dependent nucleotide dehydratase (276 aa).

One can recognise a Radical SAM core domain in the interval 6 to 216; that stretch reads TSVRKFRSAN…RRRHEDIGCI (211 aa). The [4Fe-4S] cluster site is built by cysteine 22, cysteine 26, and cysteine 29.

This sequence belongs to the radical SAM superfamily. Viperin family. It depends on [4Fe-4S] cluster as a cofactor.

The catalysed reaction is CTP + AH2 + S-adenosyl-L-methionine = 3'-deoxy-3',4'-didehydro-CTP + 5'-deoxyadenosine + L-methionine + A + H2O + H(+). Functionally, expression of pVip50 in E.coli (strain MG1655) confers resistance to phage P1; has no effect against T7. Catalyzes the conversion of cytosine triphosphate (CTP) to 3'-deoxy-3',4'-didehydro-CTP (ddhCTP), probably via a SAM-dependent radical mechanism. The modified nucleotide represses transcription from T7 RNA polymerase-directed genes (possibly by acting as chain terminators), strongly suggesting these nucleotides block viral polymerase transcription. How this protein allows bacteria to resist viruses that do not encode their own RNA polymerase (such as lambda, P1) is unknown. The protein is S-adenosylmethionine-dependent nucleotide dehydratase of Thermoplasmatales archaeon (strain ISO4-H5).